Reading from the N-terminus, the 178-residue chain is Putative adenylate kinase (178 aa).

Glycine 10, glycine 12, lysine 13, serine 14, and serine 15 together coordinate ATP. The segment at 29 to 50 (TVVELAEKHGCIIDEEDGEIVI) is NMP. An LID region spans residues 94–104 (GRNWSEEKLLE). Residue arginine 95 participates in ATP binding.

The protein belongs to the adenylate kinase family. AK6 subfamily. As to quaternary structure, interacts with uS11. Not a structural component of 40S pre-ribosomes, but transiently interacts with them by binding to uS11.

It carries out the reaction AMP + ATP = 2 ADP. It catalyses the reaction ATP + H2O = ADP + phosphate + H(+). Its function is as follows. Broad-specificity nucleoside monophosphate (NMP) kinase that catalyzes the reversible transfer of the terminal phosphate group between nucleoside triphosphates and monophosphates. Also has ATPase activity. Involved in the late maturation steps of the 30S ribosomal particles, specifically 16S rRNA maturation. While NMP activity is not required for ribosome maturation, ATPase activity is. Associates transiently with small ribosomal subunit protein uS11. ATP hydrolysis breaks the interaction with uS11. May temporarily remove uS11 from the ribosome to enable a conformational change of the ribosomal RNA that is needed for the final maturation step of the small ribosomal subunit. The protein is Putative adenylate kinase of Archaeoglobus fulgidus (strain ATCC 49558 / DSM 4304 / JCM 9628 / NBRC 100126 / VC-16).